A 385-amino-acid chain; its full sequence is 8-amino-7-oxononanoate synthase (385 aa).

Arginine 21 is a binding site for substrate. 108–109 (GF) is a pyridoxal 5'-phosphate binding site. Histidine 133 contributes to the substrate binding site. Pyridoxal 5'-phosphate contacts are provided by serine 179, histidine 207, and threonine 233. Lysine 236 carries the N6-(pyridoxal phosphate)lysine modification. Position 352 (threonine 352) interacts with substrate.

Belongs to the class-II pyridoxal-phosphate-dependent aminotransferase family. BioF subfamily. In terms of assembly, homodimer. Pyridoxal 5'-phosphate serves as cofactor.

The catalysed reaction is 6-carboxyhexanoyl-[ACP] + L-alanine + H(+) = (8S)-8-amino-7-oxononanoate + holo-[ACP] + CO2. It functions in the pathway cofactor biosynthesis; biotin biosynthesis. Functionally, catalyzes the decarboxylative condensation of pimeloyl-[acyl-carrier protein] and L-alanine to produce 8-amino-7-oxononanoate (AON), [acyl-carrier protein], and carbon dioxide. The polypeptide is 8-amino-7-oxononanoate synthase (Salmonella newport (strain SL254)).